A 443-amino-acid polypeptide reads, in one-letter code: MFLAQEIIRKKRNGLALSTEEIQFFVKGITTNAVSEGQIAALGMAVYFNDMNMDERIALTTAMRDSGTVLNWQSLGLNGPVIDKHSTGGVGDVISLMLGPMAAACGGYVPMISGRGLGHTGGTLDKFDAIPGYQTEPSSELFRKVVKDVGVAIIGQTGDLVPADKRFYSIRDNTATVESISLITASILSKKLACSLDALAMDVKVGSGAFMPTYEASEELARSIAAVANGAGTKTTALLTDMNQVLASCAGNAVEVKEAIDFLTGAYRNPRLYAVTMGLCAEMLLLGGLATDEADARAKLNRVLDNGRAAEIFGKMVSGLGGPVDFVENYSKYLPQSQIIRPVFADTQGYAHSMDTRELGLAVVTLGGGRRKPGDALDYSVGLTQVCALGDKIDASTPIAVIHAQSEDAFAQAEEAVKKAIRIDEVAPEKTPEIYAYIRAADL.

This sequence belongs to the thymidine/pyrimidine-nucleoside phosphorylase family. As to quaternary structure, homodimer.

The catalysed reaction is thymidine + phosphate = 2-deoxy-alpha-D-ribose 1-phosphate + thymine. It participates in pyrimidine metabolism; dTMP biosynthesis via salvage pathway; dTMP from thymine: step 1/2. Functionally, the enzymes which catalyze the reversible phosphorolysis of pyrimidine nucleosides are involved in the degradation of these compounds and in their utilization as carbon and energy sources, or in the rescue of pyrimidine bases for nucleotide synthesis. This Shewanella sp. (strain MR-7) protein is Thymidine phosphorylase.